Consider the following 795-residue polypeptide: ATP-dependent RNA helicase DHX15 (795 aa).

Positions 1–108 are disordered; sequence MSKRHRLDLG…HSTHAGHAGH (108 aa). Serine 15 bears the Phosphoserine mark. The span at 20–62 shows a compositional bias: basic and acidic residues; sequence AGTDGKDRDRDRDREDRSKDRDRERDRGDREREREKEKEKELR. Low complexity predominate over residues 79 to 108; it reads ASHSAHSTHSAHSTHSTHSAHSTHAGHAGH. In terms of domain architecture, Helicase ATP-binding spans 147-313; the sequence is TDILVRHQSF…FDNCPLLTIP (167 aa). 160-167 is a binding site for ATP; that stretch reads GETGSGKT. The DEAH box motif lies at 260 to 263; it reads DEAH. A Helicase C-terminal domain is found at 338–518; sequence TVIQIHMCEE…SVVLQLKKLG (181 aa). Position 488 is an N6-acetyllysine (lysine 488). Lysine 786 is covalently cross-linked (Glycyl lysine isopeptide (Lys-Gly) (interchain with G-Cter in SUMO2)).

This sequence belongs to the DEAD box helicase family. DEAH subfamily. DDX15/PRP43 sub-subfamily. In terms of assembly, component of the U11/U12 snRNPs that are part of the U12-type spliceosome. Identified in the Intron Large spliceosome complex (IL, also named intron lariat spliceosome), a post-mRNA release spliceosomal complex containing the excised intron, U2, U5 and U6 snRNPs, and splicing factors; the association may be transient. The IL complex exists in two distinct conformations, one with the DHX15 (ILS2) and one without (ILS1). Interacts with TFIP11 (via G-patch domain); indicative for a recruitment to the IL complex. Interacts with SSB/La. Interacts with GPATCH2 (via G-patch domain); promoting the RNA helicase activity. Interacts with NKRF (via G-patch domain); promoting the RNA helicase activity. Interacts with NLRP6. In terms of tissue distribution, ubiquitous.

It localises to the nucleus. It is found in the nucleolus. The catalysed reaction is ATP + H2O = ADP + phosphate + H(+). Its activity is regulated as follows. ATPase activity is enhanced upon binding to G-patch domain-containing proteins. G-patch domain-containing proteins act like a brace that tethers mobile sections of DHX15 together, stabilizing a functional conformation with high RNA affinity, thereby promoting the ATPase activity. Its function is as follows. RNA helicase involved in mRNA processing and antiviral innate immunity. Pre-mRNA processing factor involved in disassembly of spliceosomes after the release of mature mRNA. In cooperation with TFIP11 seem to be involved in the transition of the U2, U5 and U6 snRNP-containing IL complex to the snRNP-free IS complex leading to efficient debranching and turnover of excised introns. Plays a key role in antiviral innate immunity by promoting both MAVS-dependent signaling and NLRP6 inflammasome. Acts as an RNA virus sensor: recognizes and binds viral double stranded RNA (dsRNA) and activates the MAVS-dependent signaling to produce interferon-beta and interferon lambda-3 (IFNL3). Involved in intestinal antiviral innate immunity together with NLRP6: recognizes and binds viral dsRNA and promotes activation of the NLRP6 inflammasome in intestinal epithelial cells to restrict infection by enteric viruses. The NLRP6 inflammasome acts by promoting maturation and secretion of IL18 in the extracellular milieu. Also involved in antibacterial innate immunity by promoting Wnt-induced antimicrobial protein expression in Paneth cells. The protein is ATP-dependent RNA helicase DHX15 of Homo sapiens (Human).